Consider the following 227-residue polypeptide: Ribonuclease S-5 (227 aa).

Positions 1–27 (MGITGMVYVVTMVFLLIVLILSSSTVG) are cleaved as a signal peptide. Position 36 (glutamine 36) interacts with RNA. Cysteine 42 and cysteine 49 are oxidised to a cystine. Asparagine 45 carries N-linked (GlcNAc...) asparagine glycosylation. Residues histidine 60, 97 to 98 (NV), phenylalanine 107, 110 to 111 (KE), and 114 to 115 (KH) contribute to the RNA site. The active-site Proton donor is histidine 60. A disulfide bond links cysteine 75 and cysteine 118. Glutamate 111 is an active-site residue. Histidine 115 acts as the Proton acceptor in catalysis. Asparagine 143 is a glycosylation site (N-linked (GlcNAc...) asparagine). 2 cysteine pairs are disulfide-bonded: cysteine 182–cysteine 220 and cysteine 197–cysteine 208.

It belongs to the RNase T2 family. N-glycan at Asn-45 consists of disaccharide (GlcNAc-GlcNAc). N-linked core structure at Asn-143 contains xylose.

It catalyses the reaction a ribonucleotidyl-ribonucleotide-RNA + H2O = a 3'-end 3'-phospho-ribonucleotide-RNA + a 5'-end dephospho-ribonucleoside-RNA + H(+). Its function is as follows. Self-incompatibility (SI) is the inherited ability of a flowering plant to prevent self-fertilization by discriminating between self and non-self pollen during pollination. In many species, self-incompatibility is controlled by the single, multiallelic locus S. This is Ribonuclease S-5 from Pyrus pyrifolia (Chinese pear).